A 277-amino-acid chain; its full sequence is Co-chaperone protein DjlA (277 aa).

At 1 to 6 (MRYWGK) the chain is on the periplasmic side. The chain crosses the membrane as a helical span at residues 7–31 (LLGLVLGVMYAPGVVGALLGLLVGH). Topologically, residues 32–277 (MVDRALGAKR…DLIKREKGFK (246 aa)) are cytoplasmic. The region spanning 211-277 (DACKVLGVNS…DLIKREKGFK (67 aa)) is the J domain.

In terms of assembly, homodimer.

It localises to the cell inner membrane. Regulatory DnaK co-chaperone. Direct interaction between DnaK and DjlA is needed for the induction of the wcaABCDE operon, involved in the synthesis of a colanic acid polysaccharide capsule, possibly through activation of the RcsB/RcsC phosphotransfer signaling pathway. The colanic acid capsule may help the bacterium survive conditions outside the host. This Yersinia pestis protein is Co-chaperone protein DjlA.